A 733-amino-acid polypeptide reads, in one-letter code: Leucine-rich repeat neuronal protein 4 (733 aa).

The signal sequence occupies residues 1-19 (MRWTLMLQLLQLLLQLLMA). Residues 20–676 (QSQSLERISQ…CATFTTKPSS (657 aa)) are Extracellular-facing. 10 LRR repeats span residues 62-82 (GVTTLNLANRSLESLPSCLPR), 83-106 (TLRSLDGSHNLLRALSEPVLGRLP), 107-128 (ELRVLTLHHNRISVLHWGRDTL), 130-151 (ELRELDLSHNLLTELPPCAGPS), 154-175 (SLRSLALAGNPLRALLPRTFAC), 178-199 (ALRLLNLSCSELGHIAQEAFAG), 207-230 (ALELLDLSGTSLERVESGWIRNLP), 231-253 (KLKSLFLRKMPRLKTLEGDIFKM), 256-278 (NLRQLDCGDSPALTSVHTEIFQD), and 281-302 (NLQVLQFQNCNLSSFGPWNSSQ). A glycan (N-linked (GlcNAc...) asparagine) is linked at Asn-70. An N-linked (GlcNAc...) asparagine glycan is attached at Asn-183. Asn-291, Asn-299, Asn-327, Asn-408, and Asn-469 each carry an N-linked (GlcNAc...) asparagine glycan. The LRRCT domain maps to 311-364 (NPLICSCELAWLLVDVNKTVLHRAADTMCEPALGSTGPFSGPLSLSHLSNVCRS). The segment at 395-423 (STALSAQPGGSQQNITKVPSLTMTSPTQG) is disordered. The tract at residues 480 to 518 (KYLEPLPTSPNPRSLPQTKQRTQATPRALHTDPPQDEIP) is disordered. Over residues 490–504 (NPRSLPQTKQRTQAT) the composition is skewed to polar residues. In terms of domain architecture, Fibronectin type-III spans 576-675 (TPDPPTLQGV…SCATFTTKPS (100 aa)). N-linked (GlcNAc...) asparagine glycosylation occurs at Asn-619. A helical transmembrane segment spans residues 677-697 (VVIFWGLCTASGLLLVSTLVL). Residues 698 to 733 (SVCLWRQRWKPHRQFYDTHLVAFKNPARAEEVTQWE) lie on the Cytoplasmic side of the membrane.

It is found in the membrane. In terms of biological role, may play an important role in hippocampus-dependent long-lasting memory. In Mus musculus (Mouse), this protein is Leucine-rich repeat neuronal protein 4 (Lrrn4).